An 81-amino-acid polypeptide reads, in one-letter code: uncharacterized protein (81 aa).

The N-terminal 20 residues, M1–A20, are a transit peptide targeting the mitochondrion. Residues Y27–Q53 form a disordered region. The segment covering G28–Q53 has biased composition (low complexity). A helical transmembrane segment spans residues I59 to M79.

The protein localises to the mitochondrion membrane. This is an uncharacterized protein from Schizosaccharomyces pombe (strain 972 / ATCC 24843) (Fission yeast).